Consider the following 172-residue polypeptide: Shikimate kinase (172 aa).

14–19 (GAGKST) contributes to the ATP binding site. Ser-18 is a Mg(2+) binding site. Substrate contacts are provided by Asp-36, Arg-60, and Gly-82. Arg-120 is a binding site for ATP. Arg-140 provides a ligand contact to substrate. Gln-157 contacts ATP.

Belongs to the shikimate kinase family. In terms of assembly, monomer. The cofactor is Mg(2+).

The protein localises to the cytoplasm. The catalysed reaction is shikimate + ATP = 3-phosphoshikimate + ADP + H(+). The protein operates within metabolic intermediate biosynthesis; chorismate biosynthesis; chorismate from D-erythrose 4-phosphate and phosphoenolpyruvate: step 5/7. Its function is as follows. Catalyzes the specific phosphorylation of the 3-hydroxyl group of shikimic acid using ATP as a cosubstrate. The sequence is that of Shikimate kinase from Colwellia psychrerythraea (strain 34H / ATCC BAA-681) (Vibrio psychroerythus).